Consider the following 56-residue polypeptide: Large ribosomal subunit protein eL40 (56 aa).

Belongs to the eukaryotic ribosomal protein eL40 family.

This chain is Large ribosomal subunit protein eL40, found in Metallosphaera sedula (strain ATCC 51363 / DSM 5348 / JCM 9185 / NBRC 15509 / TH2).